The following is a 689-amino-acid chain: Glycine--tRNA ligase beta subunit (689 aa).

It belongs to the class-II aminoacyl-tRNA synthetase family. In terms of assembly, tetramer of two alpha and two beta subunits.

Its subcellular location is the cytoplasm. The catalysed reaction is tRNA(Gly) + glycine + ATP = glycyl-tRNA(Gly) + AMP + diphosphate. The chain is Glycine--tRNA ligase beta subunit (glyS) from Coxiella burnetii (strain RSA 493 / Nine Mile phase I).